An 89-amino-acid polypeptide reads, in one-letter code: Small ribosomal subunit protein uS15 (89 aa).

Belongs to the universal ribosomal protein uS15 family. In terms of assembly, part of the 30S ribosomal subunit. Forms a bridge to the 50S subunit in the 70S ribosome, contacting the 23S rRNA.

Its function is as follows. One of the primary rRNA binding proteins, it binds directly to 16S rRNA where it helps nucleate assembly of the platform of the 30S subunit by binding and bridging several RNA helices of the 16S rRNA. In terms of biological role, forms an intersubunit bridge (bridge B4) with the 23S rRNA of the 50S subunit in the ribosome. The polypeptide is Small ribosomal subunit protein uS15 (Oenococcus oeni (strain ATCC BAA-331 / PSU-1)).